Consider the following 456-residue polypeptide: MPQNTLNIVILAAGKGTRMYSKMPKVLHRIGGKPMLGRVIDTAAALNPQNICVVIGHGKDQVLNAVKRDVVWVEQTEQLGTGHAVKTALPHLSAEGRTLVLYGDVPLIDVKTLKTLLEAAGNEVGLLTDVPADPTGLGRIIRDGNGSVTAIVEEKDADAAQKAVKEINTGILVLPNAKLENWLNSLSSNNAQGEYYLTDLIAKAVADGIKVHPVQVHTSYLAAGVNNKLQLAELERIFQTEQAQELLKAGVTLSDPARFDLRGRLKHGQDVVIDVNCIFEGEVEIGDNVEIGANCVIKNAKIGANSKIAPFSHLEDCEVGENNRIGPYARLRPQAKLAADVHIGNFVEIKNAAIGKGTKANHLTYIGDAEVGSKTNFGAGTIIANYDGVHKHKTVIGNEVRIGSNCVLVAPVTLGNKVTTGAGSAITRNVEDGKLALARARQTVIEGWVRPEKDKQ.

The tract at residues methionine 1–lysine 228 is pyrophosphorylase. UDP-N-acetyl-alpha-D-glucosamine-binding positions include leucine 11–glycine 14, lysine 25, glutamine 75, glycine 80–threonine 81, tyrosine 102–aspartate 104, glycine 138, glutamate 153, asparagine 168, and asparagine 226. Position 104 (aspartate 104) interacts with Mg(2+). Residue asparagine 226 coordinates Mg(2+). Residues leucine 229–alanine 249 form a linker region. An N-acetyltransferase region spans residues glycine 250–glutamine 456. Positions 332 and 350 each coordinate UDP-N-acetyl-alpha-D-glucosamine. The Proton acceptor role is filled by histidine 362. Residues tyrosine 365 and asparagine 376 each contribute to the UDP-N-acetyl-alpha-D-glucosamine site. Acetyl-CoA contacts are provided by residues alanine 379, asparagine 385 to tyrosine 386, serine 404, alanine 422, and arginine 439.

It in the N-terminal section; belongs to the N-acetylglucosamine-1-phosphate uridyltransferase family. In the C-terminal section; belongs to the transferase hexapeptide repeat family. Homotrimer. Requires Mg(2+) as cofactor.

Its subcellular location is the cytoplasm. It carries out the reaction alpha-D-glucosamine 1-phosphate + acetyl-CoA = N-acetyl-alpha-D-glucosamine 1-phosphate + CoA + H(+). The catalysed reaction is N-acetyl-alpha-D-glucosamine 1-phosphate + UTP + H(+) = UDP-N-acetyl-alpha-D-glucosamine + diphosphate. It functions in the pathway nucleotide-sugar biosynthesis; UDP-N-acetyl-alpha-D-glucosamine biosynthesis; N-acetyl-alpha-D-glucosamine 1-phosphate from alpha-D-glucosamine 6-phosphate (route II): step 2/2. Its pathway is nucleotide-sugar biosynthesis; UDP-N-acetyl-alpha-D-glucosamine biosynthesis; UDP-N-acetyl-alpha-D-glucosamine from N-acetyl-alpha-D-glucosamine 1-phosphate: step 1/1. It participates in bacterial outer membrane biogenesis; LPS lipid A biosynthesis. Catalyzes the last two sequential reactions in the de novo biosynthetic pathway for UDP-N-acetylglucosamine (UDP-GlcNAc). The C-terminal domain catalyzes the transfer of acetyl group from acetyl coenzyme A to glucosamine-1-phosphate (GlcN-1-P) to produce N-acetylglucosamine-1-phosphate (GlcNAc-1-P), which is converted into UDP-GlcNAc by the transfer of uridine 5-monophosphate (from uridine 5-triphosphate), a reaction catalyzed by the N-terminal domain. This chain is Bifunctional protein GlmU, found in Neisseria meningitidis serogroup C / serotype 2a (strain ATCC 700532 / DSM 15464 / FAM18).